Here is a 1048-residue protein sequence, read N- to C-terminus: Putative truncated guanine nucleotide exchange factor SDC25 (1048 aa).

Disordered regions lie at residues 208-242 and 419-444; these read SKQG…VSGS and LNLD…DEYE. The span at 212–224 shows a compositional bias: low complexity; that stretch reads TSCSSETSHHSPS. The N-terminal Ras-GEF domain occupies 578 to 710; sequence SNNRIKGGSK…LLKEVNQKFK (133 aa). Positions 748-995 constitute a Ras-GEF domain; the sequence is DPVLFATQLT…YQLSLIIEPK (248 aa). Positions 997–1048 are disordered; that stretch reads RKKVVPNSNSNNKSQEKSRDDQTDEGKTSTKKDRFPKFQLHKTKKKAPKVSK. The segment covering 1010–1032 has biased composition (basic and acidic residues); it reads SQEKSRDDQTDEGKTSTKKDRFP. The segment covering 1035–1048 has biased composition (basic residues); that stretch reads QLHKTKKKAPKVSK.

Functionally, promotes the exchange of Ras-bound GDP by GTP. This Saccharomyces cerevisiae (strain ATCC 204508 / S288c) (Baker's yeast) protein is Putative truncated guanine nucleotide exchange factor SDC25 (SDC25).